Reading from the N-terminus, the 231-residue chain is Cytidylate kinase (231 aa).

Residue 16-24 (GPAASGKST) participates in ATP binding. Residues 176 to 205 (PDLDSLEQEITKRDRDDAEREHAPLKKHPE) form a disordered region. Positions 184–205 (EITKRDRDDAEREHAPLKKHPE) are enriched in basic and acidic residues.

Belongs to the cytidylate kinase family. Type 1 subfamily.

The protein resides in the cytoplasm. It catalyses the reaction CMP + ATP = CDP + ADP. It carries out the reaction dCMP + ATP = dCDP + ADP. In Pelodictyon phaeoclathratiforme (strain DSM 5477 / BU-1), this protein is Cytidylate kinase.